Here is a 396-residue protein sequence, read N- to C-terminus: Putative pyridoxal phosphate-dependent acyltransferase (396 aa).

111 to 112 lines the pyridoxal 5'-phosphate pocket; sequence GF. Position 136 (H136) interacts with substrate. Pyridoxal 5'-phosphate-binding positions include S186, 211–214, and 241–244; these read DDAH and TLSK. Position 244 is an N6-(pyridoxal phosphate)lysine (K244). A substrate-binding site is contributed by T358.

Belongs to the class-II pyridoxal-phosphate-dependent aminotransferase family. Homodimer. It depends on pyridoxal 5'-phosphate as a cofactor.

In Bacillus cereus (strain ATCC 14579 / DSM 31 / CCUG 7414 / JCM 2152 / NBRC 15305 / NCIMB 9373 / NCTC 2599 / NRRL B-3711), this protein is Putative pyridoxal phosphate-dependent acyltransferase.